The sequence spans 318 residues: Beta-ketoacyl-[acyl-carrier-protein] synthase III (318 aa).

Residues C113 and H245 contribute to the active site. Residues 246–250 (QANIR) are ACP-binding. N275 is an active-site residue.

Belongs to the thiolase-like superfamily. FabH family. In terms of assembly, homodimer.

It localises to the cytoplasm. It catalyses the reaction malonyl-[ACP] + acetyl-CoA + H(+) = 3-oxobutanoyl-[ACP] + CO2 + CoA. The protein operates within lipid metabolism; fatty acid biosynthesis. Its function is as follows. Catalyzes the condensation reaction of fatty acid synthesis by the addition to an acyl acceptor of two carbons from malonyl-ACP. Catalyzes the first condensation reaction which initiates fatty acid synthesis and may therefore play a role in governing the total rate of fatty acid production. Possesses both acetoacetyl-ACP synthase and acetyl transacylase activities. Its substrate specificity determines the biosynthesis of branched-chain and/or straight-chain of fatty acids. This chain is Beta-ketoacyl-[acyl-carrier-protein] synthase III, found in Wolbachia pipientis subsp. Culex pipiens (strain wPip).